We begin with the raw amino-acid sequence, 207 residues long: Ribonuclease HII (207 aa).

The 190-residue stretch at 12–201 (ALVAGVDEVG…VRELLDVVSI (190 aa)) folds into the RNase H type-2 domain. 3 residues coordinate a divalent metal cation: D18, E19, and D110.

It belongs to the RNase HII family. Mn(2+) serves as cofactor. Mg(2+) is required as a cofactor.

The protein resides in the cytoplasm. The catalysed reaction is Endonucleolytic cleavage to 5'-phosphomonoester.. In terms of biological role, endonuclease that specifically degrades the RNA of RNA-DNA hybrids. The sequence is that of Ribonuclease HII from Azotobacter vinelandii (strain DJ / ATCC BAA-1303).